Here is a 236-residue protein sequence, read N- to C-terminus: Small ribosomal subunit protein uS3 (236 aa).

A KH type-2 domain is found at 39-107; that stretch reads IREFLTEELK…DTSLNIVEVR (69 aa). Residues 214-236 are disordered; it reads ASERRAVEGDNQGSSSNRRRENA.

This sequence belongs to the universal ribosomal protein uS3 family. As to quaternary structure, part of the 30S ribosomal subunit. Forms a tight complex with proteins S10 and S14.

Binds the lower part of the 30S subunit head. Binds mRNA in the 70S ribosome, positioning it for translation. The polypeptide is Small ribosomal subunit protein uS3 (Brucella anthropi (strain ATCC 49188 / DSM 6882 / CCUG 24695 / JCM 21032 / LMG 3331 / NBRC 15819 / NCTC 12168 / Alc 37) (Ochrobactrum anthropi)).